A 110-amino-acid chain; its full sequence is Methionine-R-sulfoxide reductase B1-A (110 aa).

Positions 1–104 (MSFCSFSGGE…FSSSLKFIPK (104 aa)) constitute a MsrB domain. Zn(2+) contacts are provided by C23, C26, C69, and C72. U93 (nucleophile) is an active-site residue. A non-standard amino acid (selenocysteine) is located at residue U93.

It belongs to the MsrB Met sulfoxide reductase family. Zn(2+) serves as cofactor. In the embryo, expressed in the polster, paraxial mesoderm, tectum, otic vesicle and liver.

It is found in the cytoplasm. It localises to the nucleus. The protein resides in the cytoskeleton. The catalysed reaction is L-methionyl-[protein] + [thioredoxin]-disulfide + H2O = L-methionyl-(R)-S-oxide-[protein] + [thioredoxin]-dithiol. It carries out the reaction [thioredoxin]-disulfide + L-methionine + H2O = L-methionine (R)-S-oxide + [thioredoxin]-dithiol. Methionine-sulfoxide reductase that specifically reduces methionine (R)-sulfoxide back to methionine. While in many cases, methionine oxidation is the result of random oxidation following oxidative stress, methionine oxidation is also a post-translational modification that takes place on specific residue. Acts as a regulator of actin assembly by reducing methionine (R)-sulfoxide mediated by MICALs (mical1, mical2 or mical3) on actin, thereby promoting filament repolymerization. Plays a role in innate immunity by reducing oxidized actin, leading to actin repolymerization in macrophages. The chain is Methionine-R-sulfoxide reductase B1-A (msrb1) from Danio rerio (Zebrafish).